A 95-amino-acid chain; its full sequence is Putative membrane protein insertion efficiency factor (95 aa).

It belongs to the UPF0161 family.

It is found in the cell membrane. Could be involved in insertion of integral membrane proteins into the membrane. This is Putative membrane protein insertion efficiency factor from Lactobacillus delbrueckii subsp. bulgaricus (strain ATCC 11842 / DSM 20081 / BCRC 10696 / JCM 1002 / NBRC 13953 / NCIMB 11778 / NCTC 12712 / WDCM 00102 / Lb 14).